Reading from the N-terminus, the 319-residue chain is uncharacterized protein (319 aa).

Positions 281–319 (KVERKQRRRDDQNIMRSKLPQQRQNPFCSTERPKRARCD) are disordered. A compositionally biased stretch (polar residues) spans 299 to 308 (LPQQRQNPFC).

It localises to the cytoplasm. It is found in the nucleus. This is an uncharacterized protein from Saccharomyces cerevisiae (strain ATCC 204508 / S288c) (Baker's yeast).